A 245-amino-acid polypeptide reads, in one-letter code: UPF0246 protein Ldb2075 (245 aa).

It belongs to the UPF0246 family.

This chain is UPF0246 protein Ldb2075, found in Lactobacillus delbrueckii subsp. bulgaricus (strain ATCC 11842 / DSM 20081 / BCRC 10696 / JCM 1002 / NBRC 13953 / NCIMB 11778 / NCTC 12712 / WDCM 00102 / Lb 14).